A 176-amino-acid chain; its full sequence is Mediator of RNA polymerase II transcription subunit 11 (176 aa).

Residues 98-176 are disordered; sequence SRVRELEETK…MGGDSSMSTN (79 aa). A compositionally biased stretch (basic and acidic residues) spans 99-108; it reads RVRELEETKA. The segment covering 124 to 154 has biased composition (low complexity); sequence HAAAQQQQQQQQQQQQQQQQMQQAAQQQQQQ.

The protein belongs to the Mediator complex subunit 11 family. In terms of assembly, component of the Mediator complex, which may include CDK8, MED4, MED6, MED11, MED14, MED17, MED18, MED20, MED21, MED22, MED27, MED28, MED30 and MED31.

The protein localises to the nucleus. Functionally, component of the Mediator complex, a coactivator involved in the regulated transcription of nearly all RNA polymerase II-dependent genes. Mediator functions as a bridge to convey information from gene-specific regulatory proteins to the basal RNA polymerase II transcription machinery. Mediator is recruited to promoters by direct interactions with regulatory proteins and serves as a scaffold for the assembly of a functional pre-initiation complex with RNA polymerase II and the general transcription factors. This chain is Mediator of RNA polymerase II transcription subunit 11 (MED11), found in Drosophila melanogaster (Fruit fly).